Reading from the N-terminus, the 322-residue chain is UDP-N-acetylenolpyruvoylglucosamine reductase (322 aa).

Residues 36–202 form the FAD-binding PCMH-type domain; it reads RAGGPAQVLF…TSVLFEGVPG (167 aa). The active site involves Arg182. Ser231 serves as the catalytic Proton donor. The active site involves Glu301.

This sequence belongs to the MurB family. FAD is required as a cofactor.

It is found in the cytoplasm. The catalysed reaction is UDP-N-acetyl-alpha-D-muramate + NADP(+) = UDP-N-acetyl-3-O-(1-carboxyvinyl)-alpha-D-glucosamine + NADPH + H(+). It participates in cell wall biogenesis; peptidoglycan biosynthesis. Its function is as follows. Cell wall formation. This is UDP-N-acetylenolpyruvoylglucosamine reductase from Brucella suis biovar 1 (strain 1330).